The sequence spans 213 residues: Vacuolar ATPase assembly integral membrane protein vph2 (213 aa).

2 consecutive transmembrane segments (helical) span residues 113-133 (ISAI…VWYC) and 142-162 (KIAL…FLYV).

The protein resides in the endoplasmic reticulum membrane. In terms of biological role, required for vacuolar ATPase assembly. This is Vacuolar ATPase assembly integral membrane protein vph2 (vph2) from Schizosaccharomyces pombe (strain 972 / ATCC 24843) (Fission yeast).